Consider the following 88-residue polypeptide: MVKLRLKRCGRKQRAVYRIVAIDVRSRREGRDLRKVGFYDPIKNQTYLNVPAILYFLEKGAQPTGTVQDILKKAEVFKELGPNQTKFN.

It belongs to the bacterial ribosomal protein bS16 family.

The protein localises to the plastid. It is found in the chloroplast. The sequence is that of Small ribosomal subunit protein bS16c from Helianthus annuus (Common sunflower).